Consider the following 446-residue polypeptide: Phosphoglucosamine mutase (446 aa).

The active-site Phosphoserine intermediate is the Ser-101. Positions 101, 240, 242, and 244 each coordinate Mg(2+). Residue Ser-101 is modified to Phosphoserine.

This sequence belongs to the phosphohexose mutase family. Requires Mg(2+) as cofactor. Post-translationally, activated by phosphorylation.

It carries out the reaction alpha-D-glucosamine 1-phosphate = D-glucosamine 6-phosphate. In terms of biological role, catalyzes the conversion of glucosamine-6-phosphate to glucosamine-1-phosphate. The polypeptide is Phosphoglucosamine mutase (Pseudomonas putida (strain ATCC 700007 / DSM 6899 / JCM 31910 / BCRC 17059 / LMG 24140 / F1)).